The following is a 493-amino-acid chain: Protein translocase subunit SecY (493 aa).

At 1–21 (MDSVIRALQPYFERIPSVERP) the chain is on the cytoplasmic side. The helical transmembrane segment at 22-48 (KGHVHFREKFGWTAAILLLYFILSNVP) threads the bilayer. The Extracellular portion of the chain corresponds to 49–59 (VFGLSPESIDI). The helical intramembrane region spans 60-67 (FAAYRALF). Residues 60-88 (FAAYRALFAGSTGSIIALGIGPIVTASII) form a discontinuously helical membrane-spanning segment. An intramembrane segment occupies 68 to 79 (AGSTGSIIALGI). Positions 80 to 88 (GPIVTASII) form an intramembrane region, helical. Residues 89-109 (LQLLVGAGIIKLDLTNPEDRA) lie on the Cytoplasmic side of the membrane. The helical transmembrane segment at 110 to 134 (AYQDFQRFLVFVMIAVEAIPQIAGG) threads the bilayer. Topologically, residues 135–151 (LLKPDLNLAAQLGVSPG) are extracellular. The chain crosses the membrane as a helical span at residues 152 to 176 (IISFLIFIQLFIGGVLIVYMDEVVS). Residues 177 to 182 (KWGIGS) lie on the Cytoplasmic side of the membrane. A helical membrane pass occupies residues 183 to 201 (GVSLFILAGIAQSIVVGLF). Over 202–244 (NWVIPPNSAMPAGIIPRWIWIAQNYPLDQLFTGSGLAFLLIQG) the chain is Extracellular. Residues 245–266 (GILALITTAAIILLVVFFEGTR) traverse the membrane as a helical segment. Residues 267–291 (VEIPLAHAVARGARGRFPIKLIYAS) lie on the Cytoplasmic side of the membrane. The helical transmembrane segment at 292 to 313 (VLPMIFVRALQANVVALGQVLH) threads the bilayer. The Extracellular segment spans residues 314–367 (ARGVTIFGEFVNGKAVSGLMFFLQPVSSPYDWIPSLVKSQGAAFAAIPDWMIYL). The chain crosses the membrane as a helical span at residues 368 to 387 (HLLIDALILVVGGIIFAWFW). Residues 388–430 (VETSGMDARTVASQIAKSGMQVPGFRKSPQVLERVLSRYIPKV) lie on the Cytoplasmic side of the membrane. Residues 431–449 (TILGGAIIGILTLVANMLG) traverse the membrane as a helical segment. Topologically, residues 450-454 (TIGNV) are extracellular. A helical transmembrane segment spans residues 455 to 469 (SGTGLLLAVSIAYRF). Topologically, residues 470–493 (YEDLAKEQLTEMHPLIRRMLGEEA) are cytoplasmic.

It belongs to the SecY/SEC61-alpha family. Component of the Sec protein translocase complex. Heterotrimer consisting of alpha (SecY), beta (SecG) and gamma (SecE) subunits. The heterotrimers can form oligomers, although 1 heterotrimer is thought to be able to translocate proteins. Interacts with the ribosome. May interact with SecDF, and other proteins may be involved.

It is found in the cell membrane. In terms of biological role, the central subunit of the protein translocation channel SecYEG. Consists of two halves formed by TMs 1-5 and 6-10. These two domains form a lateral gate at the front which open onto the bilayer between TMs 2 and 7, and are clamped together by SecE at the back. The channel is closed by both a pore ring composed of hydrophobic SecY resides and a short helix (helix 2A) on the extracellular side of the membrane which forms a plug. The plug probably moves laterally to allow the channel to open. The ring and the pore may move independently. This is Protein translocase subunit SecY from Archaeoglobus fulgidus (strain ATCC 49558 / DSM 4304 / JCM 9628 / NBRC 100126 / VC-16).